We begin with the raw amino-acid sequence, 461 residues long: Protein IQ-DOMAIN 2 (461 aa).

The segment at 1 to 55 (MGKKAKWFSSVKKAFSPDSKKSKQKLAEGQNGVISNPPVVDNVRQSSSSPPPALA) is disordered. The IQ domain maps to 114-142 (EEAAAILIQTIFRGYLARRALRAMRGLVR). A calmodulin-binding region spans residues 141-158 (VRLKLLMEGSVVKRQAAN). The disordered stretch occupies residues 278 to 461 (PLESSEKEQS…GVTVTNGAGS (184 aa)). The segment covering 310–345 (LTRNGSTQPNTPSSARGTPRNKNSFFSPPTPSRLNQ) has biased composition (polar residues). Residues 425–432 (KKRLSYPT) carry the Nuclear localization signal motif.

This sequence belongs to the IQD family. As to quaternary structure, binds to multiple calmodulin (CaM) in the presence of Ca(2+) and CaM-like proteins.

Its subcellular location is the nucleus. The protein localises to the cytoplasm. It is found in the cytoskeleton. Functionally, may be involved in cooperative interactions with calmodulins or calmodulin-like proteins. Recruits calmodulin proteins to microtubules, thus being a potential scaffold in cellular signaling and trafficking. May associate with nucleic acids and regulate gene expression at the transcriptional or post-transcriptional level. The chain is Protein IQ-DOMAIN 2 from Arabidopsis thaliana (Mouse-ear cress).